The sequence spans 76 residues: MDVTKTYVTIFVVAILTISVLIQIQQYDRCIGPCLRFYGNHQCYKNCRKAKYDGGQCDFVKKGEKLPECCCYYNKN.

The signal sequence occupies residues 1–26 (MDVTKTYVTIFVVAILTISVLIQIQQ). Cystine bridges form between Cys-30/Cys-71, Cys-34/Cys-57, Cys-43/Cys-69, and Cys-47/Cys-70.

It belongs to the DEFL family.

It localises to the secreted. The chain is Putative defensin-like protein 62 from Arabidopsis thaliana (Mouse-ear cress).